Reading from the N-terminus, the 52-residue chain is Ovomucoid (52 aa).

The Kazal-like domain maps to 2–52 (VDCSDYPKPVCTLEEMPLCGSDNKTYGNKCNFCNAVVDSNGTLTLSHFGKC). 3 disulfide bridges follow: Cys4–Cys34, Cys12–Cys31, and Cys20–Cys52. Asn41 carries an N-linked (GlcNAc...) asparagine glycan.

It localises to the secreted. The polypeptide is Ovomucoid (Scythrops novaehollandiae (Channel-billed cuckoo)).